We begin with the raw amino-acid sequence, 347 residues long: Ubiquinone biosynthesis protein coq-4, mitochondrial (347 aa).

The transit peptide at Met-1–Phe-49 directs the protein to the mitochondrion. Residues His-185, Asp-186, His-189, and Glu-201 each coordinate Zn(2+). A disordered region spans residues Ile-284–Val-310.

Belongs to the COQ4 family. In terms of assembly, component of a multi-subunit COQ enzyme complex, composed of at least coq-3, coq-4, coq-5, coq-6, coq-7 and coq-9. The cofactor is Zn(2+).

It is found in the mitochondrion inner membrane. The catalysed reaction is a 4-hydroxy-3-methoxy-5-(all-trans-polyprenyl)benzoate + H(+) = a 2-methoxy-6-(all-trans-polyprenyl)phenol + CO2. The protein operates within cofactor biosynthesis; ubiquinone biosynthesis. Its function is as follows. Lyase that catalyzes the C1-decarboxylation of 4-hydroxy-3-methoxy-5-(all-trans-polyprenyl)benzoic acid into 2-methoxy-6-(all-trans-polyprenyl)phenol during ubiquinone biosynthesis. The chain is Ubiquinone biosynthesis protein coq-4, mitochondrial from Neurospora crassa (strain ATCC 24698 / 74-OR23-1A / CBS 708.71 / DSM 1257 / FGSC 987).